A 258-amino-acid polypeptide reads, in one-letter code: Indole-3-glycerol phosphate synthase (258 aa).

It belongs to the TrpC family.

The enzyme catalyses 1-(2-carboxyphenylamino)-1-deoxy-D-ribulose 5-phosphate + H(+) = (1S,2R)-1-C-(indol-3-yl)glycerol 3-phosphate + CO2 + H2O. The protein operates within amino-acid biosynthesis; L-tryptophan biosynthesis; L-tryptophan from chorismate: step 4/5. The protein is Indole-3-glycerol phosphate synthase of Campylobacter fetus subsp. fetus (strain 82-40).